A 297-amino-acid polypeptide reads, in one-letter code: Carbamate kinase (297 aa).

Belongs to the carbamate kinase family.

It is found in the cytoplasm. The enzyme catalyses hydrogencarbonate + NH4(+) + ATP = carbamoyl phosphate + ADP + H2O + H(+). It carries out the reaction carbamate + ATP = carbamoyl phosphate + ADP. It catalyses the reaction hydrogencarbonate + NH4(+) = carbamate + H2O + H(+). It functions in the pathway nitrogen metabolism; (S)-allantoin degradation. In terms of biological role, kinase involved in the anaerobic nitrogen utilization via the assimilation of allantoin. Catalyzes the transfer of a phosphate group from carbamoyl phosphate to ADP to produce ATP and leave carbamate, which spontaneously hydrolyzes to ammonia and hydrogencarbonate. This Escherichia coli (strain K12) protein is Carbamate kinase.